The primary structure comprises 739 residues: Ent-kaurene synthase-like 3 (739 aa).

Residues Asp-475, Asp-479, Asn-619, Thr-623, and Glu-627 each contribute to the Mg(2+) site. The DDXXD motif signature appears at 475–479 (DDFFD).

Belongs to the terpene synthase family. Mg(2+) serves as cofactor. Expressed in roots and stems.

In Oryza sativa subsp. japonica (Rice), this protein is Ent-kaurene synthase-like 3 (KSL3).